A 191-amino-acid polypeptide reads, in one-letter code: Large ribosomal subunit protein bL9 (191 aa).

The interval 151–191 (AERQAKGESLTSADAIYGVDEDALKPEDFFNPEAEIESEEE) is disordered.

It belongs to the bacterial ribosomal protein bL9 family.

Its function is as follows. Binds to the 23S rRNA. This Sinorhizobium medicae (strain WSM419) (Ensifer medicae) protein is Large ribosomal subunit protein bL9.